We begin with the raw amino-acid sequence, 922 residues long: Putative ATP-dependent helicase/translocase YwqA (922 aa).

The 164-residue stretch at Leu-462 to Gly-625 folds into the Helicase ATP-binding domain. Asp-475–Thr-482 lines the ATP pocket. The DEAQ box signature appears at Asp-576–Gln-579. Positions Lys-753 to Ser-907 constitute a Helicase C-terminal domain.

This sequence belongs to the SNF2/RAD54 helicase family. As to quaternary structure, interacts with the RNA polymerase core.

The protein is Putative ATP-dependent helicase/translocase YwqA (ywqA) of Bacillus subtilis (strain 168).